The chain runs to 320 residues: MMERMYIPMASPYVTFNREQWSALRASTPLTISDNELSLLQGLNEKMSMTEVSDIYLPLSRLLNLYVGGTQELYQATHTFLGNQDGKVPFIIGIAGSVAVGKSTTARILQTLLSRWPNHPKVDLVTTDGFLYPNKVLEDRGIMKRKGFPESYDLRRFINFLSDVKSGLPEVKAPVYSHLVYDIVPDEWQTVRQPDILIVEGLNVLQPPRGDENDARISEVIVSDFFDFTIYVHAEEKHILQWYVERFKLLRQTAFSDPSSYFKRYASLSDEEATEVATGIWTEINGANLRQNILPTRVRAQLILDKGQNHMVQSVKLRKL.

Residue 96 to 103 participates in ATP binding; it reads GSVAVGKS.

Belongs to the prokaryotic pantothenate kinase family.

The protein localises to the cytoplasm. The catalysed reaction is (R)-pantothenate + ATP = (R)-4'-phosphopantothenate + ADP + H(+). It functions in the pathway cofactor biosynthesis; coenzyme A biosynthesis; CoA from (R)-pantothenate: step 1/5. This chain is Pantothenate kinase, found in Brevibacillus brevis (strain 47 / JCM 6285 / NBRC 100599).